The chain runs to 439 residues: Hydrogenobyrinate a,c-diamide synthase (439 aa).

Residues 247 to 439 (RIALAEDGAF…FFHAIARASA (193 aa)) enclose the GATase cobBQ-type domain. Residue C329 is the Nucleophile of the active site.

It belongs to the CobB/CbiA family. Mg(2+) is required as a cofactor.

It catalyses the reaction hydrogenobyrinate + 2 L-glutamine + 2 ATP + 2 H2O = hydrogenobyrinate a,c-diamide + 2 L-glutamate + 2 ADP + 2 phosphate + 2 H(+). It functions in the pathway cofactor biosynthesis; adenosylcobalamin biosynthesis; cob(II)yrinate a,c-diamide from precorrin-2 (aerobic route): step 9/10. Catalyzes the ATP-dependent amidation of the two carboxylate groups at positions a and c of hydrogenobyrinate, using either L-glutamine or ammonia as the nitrogen source. The chain is Hydrogenobyrinate a,c-diamide synthase from Mesorhizobium japonicum (strain LMG 29417 / CECT 9101 / MAFF 303099) (Mesorhizobium loti (strain MAFF 303099)).